Consider the following 907-residue polypeptide: Leucine-rich repeat-containing G-protein coupled receptor 5 (907 aa).

A signal peptide spans 1-21 (MDTSCVHMLLSLLALLQLVAA). Residues 22–561 (GSSPGPDAIP…EHLFGSWLIR (540 aa)) are Extracellular-facing. The LRRNT domain maps to 25–66 (PGPDAIPRGCPSHCHCELDGRMLLRVDCSDLGLSELPSNLSV). Cystine bridges form between Cys-34–Cys-40 and Cys-38–Cys-52. Asn-63 and Asn-77 each carry an N-linked (GlcNAc...) asparagine glycan. 16 LRR repeats span residues 67-88 (FTSYLDLSMNNISQLPASLLHR), 91-112 (FLEELRLAGNALTHIPKGAFTG), 115-136 (SLKVLMLQNNQLRQVPEEALQN), 139-160 (SLQSLRLDANHISYVPPSCFSG), 163-184 (SLRHLWLDDNALTDVPVQAFRS), 187-208 (ALQAMTLALNKIHHIADYAFGN), 211-232 (SLVVLHLHNNRIHSLGKKCFDG), 235-256 (SLETLDLNYNNLDEFPTAIKTL), 258-279 (NLKELGFHSNNIRSIPERAFVG), 282-303 (SLITIHFYDNPIQFVGVSAFQH), 306-325 (ELRTLTLNGASHITEFPHLT), 329-350 (TLESLTLTGAKISSLPQAVCDQ), 353-374 (NLQVLDLSYNLLEDLPSLSGCQ), 375-396 (KLQKIDLRHNEIYEIKGSTFQQ), 399-420 (NLRSLNLAWNKIAIIHPNAFST), and 423-446 (SLIKLDLSSNLLSSFPVTGLHGLT). N-linked (GlcNAc...) asparagine glycosylation occurs at Asn-208. Cys-348 and Cys-373 form a disulfide bridge. Cys-479 and Cys-541 form a disulfide bridge. A helical membrane pass occupies residues 562 to 582 (IGVWTTAVLALSCNALVALTV). The Cytoplasmic portion of the chain corresponds to 583–593 (FRTPLYISSIK). A helical membrane pass occupies residues 594-614 (LLIGVIAVVDILMGVSSAVLA). Over 615–638 (AVDAFTFGRFAQHGAWWEDGIGCQ) the chain is Extracellular. Cysteines 637 and 712 form a disulfide. The helical transmembrane segment at 639-659 (IVGFLSIFASESSIFLLTLAA) threads the bilayer. Residues 660 to 682 (LERGFSVKCSSKFEVKAPLFSLR) lie on the Cytoplasmic side of the membrane. The chain crosses the membrane as a helical span at residues 683 to 703 (AIVLLCVLLALTIATIPLLGG). Residues 704–723 (SKYNASPLCLPLPFGEPSTT) lie on the Extracellular side of the membrane. The helical transmembrane segment at 724-744 (GYMVALVLLNSLCFLIMTIAY) threads the bilayer. The Cytoplasmic portion of the chain corresponds to 745–767 (TKLYCSLEKGELENLWDCSMVKH). Residues 768-788 (IALLLFANCILYCPVAFLSFS) form a helical membrane-spanning segment. The Extracellular segment spans residues 789–802 (SLLNLTFISPDVIK). Asn-792 carries an N-linked (GlcNAc...) asparagine glycan. Residues 803–823 (FILLVIVPLPSCLNPLLYIVF) traverse the membrane as a helical segment. The Cytoplasmic segment spans residues 824–907 (NPHFKEDMGS…LSSVAFVPCL (84 aa)).

It belongs to the G-protein coupled receptor 1 family. In terms of assembly, identified in a complex composed of RNF43, LGR5 and RSPO1. Also interacts with other R-spondin ligands, including RSPO2, RSPO3 and RSPO4. As to expression, expressed in the intestinal epithelium (at protein level). Expressed in the gonads, the adrenal gland, and in the brain. In the central nervous system expression is restricted to the olfactory bulb. In the adrenal gland detected only in the neural-crest derived chromaffin cells of the medulla, but not in the cells of the adrenal cortex. In the gonads, the expression is high in Graafian follicle, but absent from primary and secondary follicles. In the intestine, exclusively expressed in cycling crypt base columnar cells. Expressed in the lower bulge and secondary germ area of telogen hair follicles and in the lower outer root sheath of anagen hair follicle.

Its subcellular location is the cell membrane. It is found in the golgi apparatus. The protein resides in the trans-Golgi network membrane. Its function is as follows. Receptor for R-spondins that potentiates the canonical Wnt signaling pathway and acts as a stem cell marker of the intestinal epithelium and the hair follicle. Upon binding to R-spondins (RSPO1, RSPO2, RSPO3 or RSPO4), associates with phosphorylated LRP6 and frizzled receptors that are activated by extracellular Wnt receptors, triggering the canonical Wnt signaling pathway to increase expression of target genes. In contrast to classical G-protein coupled receptors, does not activate heterotrimeric G-proteins to transduce the signal. Involved in the development and/or maintenance of the adult intestinal stem cells during postembryonic development. This is Leucine-rich repeat-containing G-protein coupled receptor 5 (Lgr5) from Mus musculus (Mouse).